The chain runs to 320 residues: Protein HEXIM1 (320 aa).

Residues 1 to 124 (MAEPLLSEFQ…RRRPSKKKRL (124 aa)) are disordered. The span at 9–19 (FQHQPQTSNCT) shows a compositional bias: polar residues. The segment covering 24 to 47 (VHEERNPDRPPGAEERVPEEDSRW) has biased composition (basic and acidic residues). A Phosphoserine modification is found at serine 98. The segment covering 109 to 124 (VGKKKHRRRPSKKKRL) has biased composition (basic residues). Residues 111 to 138 (KKKHRRRPSKKKRLWKPYYTLTWEEKKK) are basic region; mediates nuclear localization and interaction with 7SK snRNA and NR3C1. Positions 163-166 (PYNT) are interaction with P-TEFb. The interval 171–211 (MDDHDQEEPDLKTGLYPKRAAAKSDDTSDEDFMEEAGEEDG) is autoinhibitory acidic region; in absence of 7SK snRNA interacts with the basic region preventing interaction with P-TEFb and modulating subcellular localization. The tract at residues 174–223 (HDQEEPDLKTGLYPKRAAAKSDDTSDEDFMEEAGEEDGGSDGMGGDGSEF) is disordered. Serine 194 carries the phosphoserine modification. Position 197 is a phosphothreonine (threonine 197). Residues 197 to 212 (TSDEDFMEEAGEEDGG) are compositionally biased toward acidic residues. A phosphoserine mark is found at serine 198, serine 213, and serine 221. Residues 244 to 310 (SKQELIKEYL…LTENELHRQQ (67 aa)) adopt a coiled-coil conformation. The segment at 247-275 (ELIKEYLELEKCLSRMEDENNRLRLESQR) is mediates interaction with CCNT1. The segment at 271–316 (LESQRLDGDDARVRELELELDRLRAENLQLLTENELHRQQERAPLS) is required for inhibition of ESR1-dependent transcription.

This sequence belongs to the HEXIM family. As to quaternary structure, homooligomer and heterooligomer with HEXIM2; probably dimeric. Core component of the 7SK RNP complex, at least composed of 7SK RNA, LARP7, MEPCE, HEXIM1 (or HEXIM2) and P-TEFb (composed of CDK9 and CCNT1/cyclin-T1). Interacts with the N-CoR complex through NCOR1. Interacts with ESR1 and NR3C1. May interact with NF-kappa-B through RELA. Interacts with CCNT2; mediates formation of a tripartite complex with KPNA2. Part of the HDP-RNP complex composed of at least HEXIM1, PRKDC, XRCC5, XRCC6, paraspeckle proteins (SFPQ, NONO, PSPC1, RBM14, and MATR3) and NEAT1 non-coding RNA.

Its subcellular location is the nucleus. It is found in the cytoplasm. Its function is as follows. Transcriptional regulator which functions as a general RNA polymerase II transcription inhibitor. Core component of the 7SK RNP complex: in cooperation with 7SK snRNA sequesters P-TEFb in a large inactive 7SK snRNP complex preventing RNA polymerase II phosphorylation and subsequent transcriptional elongation. May also regulate NF-kappa-B, ESR1, NR3C1 and CIITA-dependent transcriptional activity. Plays a role in the regulation of DNA virus-mediated innate immune response by assembling into the HDP-RNP complex, a complex that serves as a platform for IRF3 phosphorylation and subsequent innate immune response activation through the cGAS-STING pathway. The protein is Protein HEXIM1 (HEXIM1) of Bos taurus (Bovine).